Consider the following 267-residue polypeptide: Tryptophan synthase alpha chain (267 aa).

Catalysis depends on proton acceptor residues Glu-47 and Asp-58.

Belongs to the TrpA family. As to quaternary structure, tetramer of two alpha and two beta chains.

It carries out the reaction (1S,2R)-1-C-(indol-3-yl)glycerol 3-phosphate + L-serine = D-glyceraldehyde 3-phosphate + L-tryptophan + H2O. It functions in the pathway amino-acid biosynthesis; L-tryptophan biosynthesis; L-tryptophan from chorismate: step 5/5. The alpha subunit is responsible for the aldol cleavage of indoleglycerol phosphate to indole and glyceraldehyde 3-phosphate. This Chlorobaculum parvum (strain DSM 263 / NCIMB 8327) (Chlorobium vibrioforme subsp. thiosulfatophilum) protein is Tryptophan synthase alpha chain.